A 509-amino-acid chain; its full sequence is Bifunctional purine biosynthesis protein PurH (509 aa).

The MGS-like domain occupies 1 to 146; sequence MTIQKINRVL…KNWYRVGVCV (146 aa).

Belongs to the PurH family.

The enzyme catalyses (6R)-10-formyltetrahydrofolate + 5-amino-1-(5-phospho-beta-D-ribosyl)imidazole-4-carboxamide = 5-formamido-1-(5-phospho-D-ribosyl)imidazole-4-carboxamide + (6S)-5,6,7,8-tetrahydrofolate. It carries out the reaction IMP + H2O = 5-formamido-1-(5-phospho-D-ribosyl)imidazole-4-carboxamide. It participates in purine metabolism; IMP biosynthesis via de novo pathway; 5-formamido-1-(5-phospho-D-ribosyl)imidazole-4-carboxamide from 5-amino-1-(5-phospho-D-ribosyl)imidazole-4-carboxamide (10-formyl THF route): step 1/1. The protein operates within purine metabolism; IMP biosynthesis via de novo pathway; IMP from 5-formamido-1-(5-phospho-D-ribosyl)imidazole-4-carboxamide: step 1/1. The sequence is that of Bifunctional purine biosynthesis protein PurH from Natranaerobius thermophilus (strain ATCC BAA-1301 / DSM 18059 / JW/NM-WN-LF).